The following is a 270-amino-acid chain: Acyl-[acyl-carrier-protein]--UDP-N-acetylglucosamine O-acyltransferase (270 aa).

It belongs to the transferase hexapeptide repeat family. LpxA subfamily. Homotrimer.

The protein resides in the cytoplasm. It carries out the reaction a (3R)-hydroxyacyl-[ACP] + UDP-N-acetyl-alpha-D-glucosamine = a UDP-3-O-[(3R)-3-hydroxyacyl]-N-acetyl-alpha-D-glucosamine + holo-[ACP]. It functions in the pathway glycolipid biosynthesis; lipid IV(A) biosynthesis; lipid IV(A) from (3R)-3-hydroxytetradecanoyl-[acyl-carrier-protein] and UDP-N-acetyl-alpha-D-glucosamine: step 1/6. In terms of biological role, involved in the biosynthesis of lipid A, a phosphorylated glycolipid that anchors the lipopolysaccharide to the outer membrane of the cell. In Helicobacter pylori (strain P12), this protein is Acyl-[acyl-carrier-protein]--UDP-N-acetylglucosamine O-acyltransferase.